The primary structure comprises 31 residues: Palustrin-2a (31 aa).

Residues Cys-23 and Cys-29 are joined by a disulfide bond.

Expressed by the skin glands.

The protein localises to the secreted. In terms of biological role, antimicrobial activity against Gram-negative bacterium E.coli. This Lithobates palustris (Pickerel frog) protein is Palustrin-2a.